The chain runs to 159 residues: Peptide deformylase (159 aa).

Fe cation-binding residues include cysteine 88 and histidine 130. The active site involves glutamate 131. Histidine 134 contributes to the Fe cation binding site.

This sequence belongs to the polypeptide deformylase family. Fe(2+) is required as a cofactor.

The catalysed reaction is N-terminal N-formyl-L-methionyl-[peptide] + H2O = N-terminal L-methionyl-[peptide] + formate. Functionally, removes the formyl group from the N-terminal Met of newly synthesized proteins. Requires at least a dipeptide for an efficient rate of reaction. N-terminal L-methionine is a prerequisite for activity but the enzyme has broad specificity at other positions. This Caldanaerobacter subterraneus subsp. tengcongensis (strain DSM 15242 / JCM 11007 / NBRC 100824 / MB4) (Thermoanaerobacter tengcongensis) protein is Peptide deformylase.